The following is a 209-amino-acid chain: tRNA (guanine-N(7)-)-methyltransferase (209 aa).

S-adenosyl-L-methionine is bound by residues Glu40, Glu65, and Asp114. The active site involves Asp114. Residues Asp150 and 188-191 (TAFE) contribute to the substrate site.

It belongs to the class I-like SAM-binding methyltransferase superfamily. TrmB family.

It carries out the reaction guanosine(46) in tRNA + S-adenosyl-L-methionine = N(7)-methylguanosine(46) in tRNA + S-adenosyl-L-homocysteine. Its pathway is tRNA modification; N(7)-methylguanine-tRNA biosynthesis. In terms of biological role, catalyzes the formation of N(7)-methylguanine at position 46 (m7G46) in tRNA. This Bdellovibrio bacteriovorus (strain ATCC 15356 / DSM 50701 / NCIMB 9529 / HD100) protein is tRNA (guanine-N(7)-)-methyltransferase.